The primary structure comprises 445 residues: DNA repair protein RadA (445 aa).

The C4-type zinc-finger motif lies at 10 to 27; that stretch reads CSNCANISHKWSGQCFDC. Residue 90 to 97 participates in ATP binding; it reads GEPGIGKS. A RadA KNRFG motif motif is present at residues 249 to 253; sequence KNRFG. A lon-protease-like region spans residues 348-445; sequence EIYLSIAGGL…HLQDLKEIIK (98 aa).

It belongs to the RecA family. RadA subfamily.

Functionally, DNA-dependent ATPase involved in processing of recombination intermediates, plays a role in repairing DNA breaks. Stimulates the branch migration of RecA-mediated strand transfer reactions, allowing the 3' invading strand to extend heteroduplex DNA faster. Binds ssDNA in the presence of ADP but not other nucleotides, has ATPase activity that is stimulated by ssDNA and various branched DNA structures, but inhibited by SSB. Does not have RecA's homology-searching function. The polypeptide is DNA repair protein RadA (Rickettsia typhi (strain ATCC VR-144 / Wilmington)).